Here is a 153-residue protein sequence, read N- to C-terminus: Aspartate carbamoyltransferase regulatory chain (153 aa).

Cys-110, Cys-115, Cys-138, and Cys-141 together coordinate Zn(2+).

It belongs to the PyrI family. As to quaternary structure, contains catalytic and regulatory chains. Zn(2+) serves as cofactor.

Functionally, involved in allosteric regulation of aspartate carbamoyltransferase. This is Aspartate carbamoyltransferase regulatory chain from Bacteroides fragilis (strain ATCC 25285 / DSM 2151 / CCUG 4856 / JCM 11019 / LMG 10263 / NCTC 9343 / Onslow / VPI 2553 / EN-2).